The primary structure comprises 400 residues: tRNA(Met) cytidine acetate ligase (400 aa).

ATP-binding positions include 7–20 (IVEY…HQYH), Gly-101, Asn-162, and Arg-187.

It belongs to the TmcAL family.

The protein localises to the cytoplasm. The catalysed reaction is cytidine(34) in elongator tRNA(Met) + acetate + ATP = N(4)-acetylcytidine(34) in elongator tRNA(Met) + AMP + diphosphate. Functionally, catalyzes the formation of N(4)-acetylcytidine (ac(4)C) at the wobble position of elongator tRNA(Met), using acetate and ATP as substrates. First activates an acetate ion to form acetyladenylate (Ac-AMP) and then transfers the acetyl group to tRNA to form ac(4)C34. The protein is tRNA(Met) cytidine acetate ligase of Oceanobacillus iheyensis (strain DSM 14371 / CIP 107618 / JCM 11309 / KCTC 3954 / HTE831).